Consider the following 358-residue polypeptide: Peptide chain release factor 1 (358 aa).

Position 233 is an N5-methylglutamine (glutamine 233).

The protein belongs to the prokaryotic/mitochondrial release factor family. Methylated by PrmC. Methylation increases the termination efficiency of RF1.

It is found in the cytoplasm. Its function is as follows. Peptide chain release factor 1 directs the termination of translation in response to the peptide chain termination codons UAG and UAA. The polypeptide is Peptide chain release factor 1 (Clostridium botulinum (strain Loch Maree / Type A3)).